Reading from the N-terminus, the 60-residue chain is Protein translocase subunit SecE (60 aa).

The Cytoplasmic segment spans residues 1–31 (MFARLIRYFQEARAELARVTWPTREQVVEGT). The chain crosses the membrane as a helical span at residues 32-52 (QAILLFTLAFMVILGLYDTVF). Residues 53–60 (RFLIGLLR) lie on the Extracellular side of the membrane.

The protein belongs to the SecE/SEC61-gamma family. Component of the Sec protein translocase complex. Heterotrimer consisting of SecY, SecE and SecG subunits. The heterotrimers can form oligomers, although 1 heterotrimer is thought to be able to translocate proteins. Interacts with SecDF, and other proteins may be involved. The channel interacts with SecA via subunit SecY.

Its subcellular location is the cell inner membrane. Its function is as follows. Essential subunit of the protein translocation channel SecYEG. Clamps together the 2 halves of SecY. May contact the channel plug during translocation. The polypeptide is Protein translocase subunit SecE (Thermus thermophilus (strain ATCC 27634 / DSM 579 / HB8)).